Consider the following 598-residue polypeptide: Elongation factor 4 (598 aa).

The tr-type G domain maps to 2–183 (KHIRNFCIIA…AIIEKIPHPK (182 aa)). Residues 14–19 (DHGKST) and 130–133 (NKVD) each bind GTP.

It belongs to the TRAFAC class translation factor GTPase superfamily. Classic translation factor GTPase family. LepA subfamily.

The protein resides in the cell inner membrane. It carries out the reaction GTP + H2O = GDP + phosphate + H(+). Its function is as follows. Required for accurate and efficient protein synthesis under certain stress conditions. May act as a fidelity factor of the translation reaction, by catalyzing a one-codon backward translocation of tRNAs on improperly translocated ribosomes. Back-translocation proceeds from a post-translocation (POST) complex to a pre-translocation (PRE) complex, thus giving elongation factor G a second chance to translocate the tRNAs correctly. Binds to ribosomes in a GTP-dependent manner. This Flavobacterium psychrophilum (strain ATCC 49511 / DSM 21280 / CIP 103535 / JIP02/86) protein is Elongation factor 4.